We begin with the raw amino-acid sequence, 232 residues long: MAQTKREKAIKAAVVPGKAYAFEDAINILKTATKAKFVESIDVSVRLGVDAKKSDQQVRGSTVLPAGTGKSVRVAVFAPAGAKADEALAAGAEAVGMDDLAEKMQAGDLNYDVVIATPDAMRVVGKLGTVLGPRGLMPNPKVGTVSPNPGEAVKNAKSGQVRYRTDKAGIIHCTIGKADFAEDALKSNLTALLLDLIKAKPATSKGTYLQKVSVSSTMGPGVTVDQSSLTLK.

This sequence belongs to the universal ribosomal protein uL1 family. Part of the 50S ribosomal subunit.

Binds directly to 23S rRNA. The L1 stalk is quite mobile in the ribosome, and is involved in E site tRNA release. Functionally, protein L1 is also a translational repressor protein, it controls the translation of the L11 operon by binding to its mRNA. The protein is Large ribosomal subunit protein uL1 of Stenotrophomonas maltophilia (strain R551-3).